The following is a 358-amino-acid chain: GDSL esterase/lipase At2g30220 (358 aa).

The first 22 residues, 1 to 22, serve as a signal peptide directing secretion; it reads MYISKTIVFGLFVATLLVSCNA. N-linked (GlcNAc...) asparagine glycosylation occurs at asparagine 25. Serine 40 serves as the catalytic Nucleophile. Residues asparagine 102 and asparagine 324 are each glycosylated (N-linked (GlcNAc...) asparagine). Catalysis depends on residues aspartate 332 and histidine 335.

It belongs to the 'GDSL' lipolytic enzyme family.

It localises to the secreted. In Arabidopsis thaliana (Mouse-ear cress), this protein is GDSL esterase/lipase At2g30220.